Consider the following 467-residue polypeptide: Gustatory and odorant receptor 22 (467 aa).

The Cytoplasmic portion of the chain corresponds to 1-106 (MIHTQMEDAQ…MPRTTFTWCS (106 aa)). A helical membrane pass occupies residues 107–127 (KAFLWAYFIYACETVIVLVVA). The Extracellular segment spans residues 128 to 144 (RERINKFISTSDKRFDE). A helical membrane pass occupies residues 145 to 165 (VIYNIIFMSIMVPHFLLPVAS). Residues 166–198 (WRNGSEVAKFKNMWTDFQYKYLIVTGKPIVFPK) are Cytoplasmic-facing. A helical transmembrane segment spans residues 199 to 219 (LYPITWTLCIVSWSLSLVIIL). Over 220 to 238 (SQYYLQPDFQFCHTFAYYH) the chain is Extracellular. The helical transmembrane segment at 239–259 (IIAMLNGFCSLWFVNCTAFGT) threads the bilayer. The Cytoplasmic portion of the chain corresponds to 260–304 (ASKAFAKELTDVLATERPAAKLTEYRHLWVDLSHMMQQLGKAYSN). The chain crosses the membrane as a helical span at residues 305-325 (MYGIYCLVIFFTTIIATYGSL). Topologically, residues 326-337 (SEIIEHGATYKE) are extracellular. Residues 338 to 358 (VGLFVIVFYCMSLLFIICNEA) traverse the membrane as a helical segment. At 359–414 (HHASKRVGLNFQERLLNVNLTAVDKATQKEVEMFLVAIDKNPPTMNLDGYANINRG) the chain is on the cytoplasmic side. Residues 415-435 (LITSNISFMATYLVVLMQFKL) traverse the membrane as a helical segment. Residues 436–467 (TLLRQSAKNAFISALKANLSRIRSLDADKVNT) lie on the Extracellular side of the membrane. The N-linked (GlcNAc...) asparagine glycan is linked to Asn453.

This sequence belongs to the insect chemoreceptor superfamily. Gustatory receptor (GR) family. Gr21a subfamily. Carbon dioxide-responsive neurons coexpress GPRgr22 and GPRgr24 in the maxillary palp at both larval and adult life stages.

It is found in the cell membrane. Gustatory receptor which mediates acceptance or avoidance behavior, depending on its substrates. GPRgr22 and GPRgr24 together are sufficient for olfactory carbon dioxide-chemosensation. In Anopheles gambiae (African malaria mosquito), this protein is Gustatory and odorant receptor 22.